An 86-amino-acid polypeptide reads, in one-letter code: U-actitoxin-Avd10a (86 aa).

An N-terminal signal peptide occupies residues 1 to 20; that stretch reads MSRIAILLFVAFLLVAGISA. The propeptide occupies 21 to 42; that stretch reads KSTAHFKKNVLADLFKERRFNA. A ShKT domain is found at 51 to 86; it reads CVNIDVDSFCDGMAERGACNIIPQMATNCAKACNSC. 3 cysteine pairs are disulfide-bonded: Cys51–Cys86, Cys60–Cys79, and Cys69–Cys83.

The protein belongs to the sea anemone type 1 potassium channel toxin family. Type 1b subfamily.

Its subcellular location is the secreted. The protein resides in the nematocyst. Inhibits voltage-gated potassium channels (Kv1/KCNA). This is U-actitoxin-Avd10a from Anemonia viridis (Snakelocks anemone).